A 198-amino-acid chain; its full sequence is Recombination protein RecR (198 aa).

The segment at Cys58–Cys73 adopts a C4-type zinc-finger fold. A Toprim domain is found at Ser81–Pro175.

This sequence belongs to the RecR family.

In terms of biological role, may play a role in DNA repair. It seems to be involved in an RecBC-independent recombinational process of DNA repair. It may act with RecF and RecO. This chain is Recombination protein RecR, found in Clostridium kluyveri (strain NBRC 12016).